A 498-amino-acid chain; its full sequence is MDFFTEYGEGNRYKIEEVIGKGSYGVVCSALDTHTGEKVAIKKINDIFEHVSDATRILREIKLLRLLRHPDIVEIKHILLPPSRREFKDIYVVFELMESDLHQVIKANDDLTPEHYQFFLYQLLRGLKYIHTANVFHRDLKPKNILANADCKLKICDFGLARVAFSDTPTAIFWTDYVATRWYRAPELCGSFFSKYTPAIDIWSIGCIFAELLTGKPLFPGKNVVHQLDIITDLLGTPSTEAISRIRNEKARRYLSSMRRKKPIPFTQKFPNADPLALRLLERMLSFEPKDRPNAEEALADPYFRNIANVDREPSAQPVTKLEFEFERRRITKEDIRELIYRDILEYHPNMLREYLEGTESAGFMYPSAVDHFKKQFAYLEEHYAKGSTAAPPERQHNSLPRPSVLYSDDRPQNTANIAEDLSKCVLGDNTQKMHQGSASVCANRVPQGGAARPGKVVGSALRYGNCSTSTAEQYEHRRTDRNPALATNTVSPRGSYP.

The Protein kinase domain maps to 13–304 (YKIEEVIGKG…AEEALADPYF (292 aa)). Residues 19-27 (IGKGSYGVV) and lysine 42 each bind ATP. Aspartate 139 serves as the catalytic Proton acceptor. Phosphothreonine is present on threonine 175. The TXY motif lies at 175-177 (TDY). Tyrosine 177 carries the post-translational modification Phosphotyrosine. 2 disordered regions span residues 388–411 (STAAPPERQHNSLPRPSVLYSDDR) and 470–498 (STAEQYEHRRTDRNPALATNTVSPRGSYP). Polar residues predominate over residues 486–498 (LATNTVSPRGSYP).

It belongs to the protein kinase superfamily. CMGC Ser/Thr protein kinase family. MAP kinase subfamily. Dually phosphorylated on Thr-175 and Tyr-177, which activates the enzyme.

The catalysed reaction is L-seryl-[protein] + ATP = O-phospho-L-seryl-[protein] + ADP + H(+). The enzyme catalyses L-threonyl-[protein] + ATP = O-phospho-L-threonyl-[protein] + ADP + H(+). Its activity is regulated as follows. Activated by threonine and tyrosine phosphorylation. This is Mitogen-activated protein kinase 15 (MPK15) from Oryza sativa subsp. japonica (Rice).